Consider the following 858-residue polypeptide: Gamma-secretase-activating protein (858 aa).

This sequence belongs to the GSAP family. Interacts with APP; specifically interacts with the CTF-alpha product of APP. Interacts with the gamma-secretase complex. The protein is first synthesized as a holoprotein form of 98 kDa and rapidly processed into the gamma-secretase-activating protein 16 kDa C-terminal form, which constitutes the predominant form.

The protein resides in the golgi apparatus. It is found in the trans-Golgi network. In terms of biological role, regulator of gamma-secretase activity, which specifically activates the production of amyloid-beta protein (amyloid-beta protein 40 and amyloid-beta protein 42), without affecting the cleavage of other gamma-secretase targets such has Notch. The gamma-secretase complex is an endoprotease complex that catalyzes the intramembrane cleavage of integral membrane proteins such as Notch receptors and APP (amyloid-beta precursor protein). Specifically promotes the gamma-cleavage of APP CTF-alpha (also named APP-CTF) by the gamma-secretase complex to generate amyloid-beta, while it reduces the epsilon-cleavage of APP CTF-alpha, leading to a low production of AICD. This is Gamma-secretase-activating protein (Gsap) from Mus musculus (Mouse).